The sequence spans 146 residues: Hemoglobin subunit beta-1 (146 aa).

Positions 2–146 (EWTDAEKSTI…VVAAMGSRYF (145 aa)) constitute a Globin domain. Positions 63 and 92 each coordinate heme b.

This sequence belongs to the globin family. Heterotetramer of two alpha chains and two beta chains. In terms of tissue distribution, red blood cells.

Involved in oxygen transport from gills to the various peripheral tissues. The chain is Hemoglobin subunit beta-1 (hbb1) from Oncorhynchus mykiss (Rainbow trout).